The sequence spans 266 residues: HLA class II histocompatibility antigen, DR beta 3 chain (266 aa).

An N-terminal signal peptide occupies residues 1–29 (MVCLKLPGGSSLAALTVTLMVLSSRLAFA). A beta-1 region spans residues 30-124 (GDTRPRFLEL…GESFTVQRRV (95 aa)). At 30–227 (GDTRPRFLEL…RARSESAQSK (198 aa)) the chain is on the extracellular side. 2 disulfide bridges follow: C44/C108 and C146/C202. N-linked (GlcNAc...) asparagine glycosylation is present at N48. The tract at residues 125-227 (HPQVTVYPAK…RARSESAQSK (103 aa)) is beta-2. One can recognise an Ig-like C1-type domain in the interval 126 to 214 (PQVTVYPAKT…EHPSVTSALT (89 aa)). A helical membrane pass occupies residues 228-248 (MLSGVGGFVLGLLFLGAGLFI). The Cytoplasmic portion of the chain corresponds to 249-266 (YFRNQKGHSGLQPTGFLS).

This sequence belongs to the MHC class II family. Heterotrimer that consists of an alpha chain HLA-DRA, a beta chain HLA-DRB1 and a peptide (peptide-MHCII). Newly synthesized alpha and beta chains forms a heterodimer (MHCII) that associates with the CD74/invariant chain (Ii) in the endoplasmic reticulum (ER). Ii is a trimer composed of three subunits and each subunit interacts with one MHCII dimer, blocking the peptide-binding cleft. As a result, MHCII molecules cannot bind peptides present in the ER. The complex of MHCII and CD74/Ii is transported in vesicles from ER to Golgi to lysosomes, where it encounters antigenic peptides generated via proteolysis of endocytosed antigens. MHCII dimers are dissociated from CD74/Ii by the combined action of proteolysis and HLA-DM. Lysosomal enzymes such as cathepsin, degrade CD74/Ii leaving a 24 amino acid remnant called class II-associated Ii or CLIP. Interacts (via the peptide binding cleft) with CLIP; this interaction inhibits antigen peptide binding before entry in the endosomal compartment. The displacement of CLIP and replacement by a high affinity peptide in lysosomes is performed by HLA-DM heterodimer. HLA-DM catalyzes CLIP dissociation from MHCII, stabilizes empty MHCII and mediates the selection of high affinity peptides. Interacts with HLA-DM heterodimer; this interaction is direct. Interacts with TCR (via CDR3). Interacts (via beta-2 domain) with CD4 coreceptor (via Ig-like V-type domain); this interaction is of exceptionally low affinity yet necessary for optimal recognition of antigenic peptides. Post-translationally, ubiquitinated by MARCHF1 and MARCHF8 at Lys-254 leading to sorting into the endosome system and down-regulation of MHC class II. Expressed in professional APCs: monocyte/macrophages, dendritic cells and B cells (at protein level).

The protein localises to the cell membrane. The protein resides in the endoplasmic reticulum membrane. It localises to the lysosome membrane. Its subcellular location is the late endosome membrane. It is found in the autolysosome membrane. In terms of biological role, a beta chain of antigen-presenting major histocompatibility complex class II (MHCII) molecule. In complex with the alpha chain HLA-DRA, displays antigenic peptides on professional antigen presenting cells (APCs) for recognition by alpha-beta T cell receptor (TCR) on HLA-DRB3-restricted CD4-positive T cells. This guides antigen-specific T-helper effector functions, both antibody-mediated immune response and macrophage activation, to ultimately eliminate the infectious agents and transformed cells. Typically presents extracellular peptide antigens of 10 to 30 amino acids that arise from proteolysis of endocytosed antigens in lysosomes. In the tumor microenvironment, presents antigenic peptides that are primarily generated in tumor-resident APCs likely via phagocytosis of apoptotic tumor cells or macropinocytosis of secreted tumor proteins. Presents peptides derived from intracellular proteins that are trapped in autolysosomes after macroautophagy, a mechanism especially relevant for T cell selection in the thymus and central immune tolerance. The selection of the immunodominant epitopes follows two processing modes: 'bind first, cut/trim later' for pathogen-derived antigenic peptides and 'cut first, bind later' for autoantigens/self-peptides. The anchor residue at position 1 of the peptide N-terminus, usually a large hydrophobic residue, is essential for high affinity interaction with MHCII molecules. Its function is as follows. ALLELE DRB3*01:01: Exclusively presents several immunogenic epitopes derived from C.tetani neurotoxin tetX, playing a significant role in immune recognition and long-term protection. Presents viral epitopes derived from HHV-6B U11, TRX2/U56 and U85 antigens to polyfunctional CD4-positive T cells with cytotoxic activity implicated in control of HHV-6B infection. ALLELE DRB3*02:02 Exclusively presents several immunogenic epitopes derived from C.tetani neurotoxin tetX, playing a significant role in immune recognition and long-term protection. Upon EBV infection, presents to CD4-positive T cells latent antigen EBNA2 (PRSPTVFYNIPPMPLPPSQL) and lytic antigen BZLF1 (LTAYHVSTAPTGSWF) peptides, driving oligoclonal expansion and selection of virus-specific memory T cell subsets with cytotoxic potential to directly eliminate virus-infected B cells. Presents viral epitopes derived from HHV-6B U11, gB/U39 and gH/U48 antigens to polyfunctional CD4-positive T cells with cytotoxic activity implicated in control of HHV-6B infection. Plays a minor role in CD4-positive T cell immune response against Dengue virus by presenting conserved peptides from capsid and non-structural NS3 proteins. Displays peptides derived from IAV matrix protein M, implying a role in protection against IAV infection. In the context of tumor immunesurveillance, may present to T-helper 1 cells an immunogenic epitope derived from tumor-associated antigen WT1 (KRYFKLSHLQMHSRKH), likely providing for effective antitumor immunity in a wide range of solid and hematological malignancies. Presents to Vbeta2-positive T-helper 1 cells specifically an immunodominant peptide derived from tumor antigen CTAG1A/NY-ESO-1(PGVLLKEFTVSGNILTIRLTAADHR) and confers protective memory response. In metastatic epithelial tumors, presents to intratumoral CD4-positive T cells a TP53 neoantigen (HYNYMCNSSCMGSMNRRPILTIITL) carrying G245S hotspot driver mutation and may mediate tumor regression. Functionally, ALLELE DRB3*03:01: Presents a series of conserved peptides derived from the M.tuberculosis PPE family of proteins, in particular PPE29 and PPE33, known to be highly immunogenic. Presents immunogenic epitopes derived from C.tetani neurotoxin tetX, playing a role in immune recognition and long-term protection. Displays immunodominant viral peptides from HCV non-structural protein NS2, as part of a broad range T-helper response to resolve infection. The polypeptide is HLA class II histocompatibility antigen, DR beta 3 chain (HLA-DRB3) (Homo sapiens (Human)).